A 93-amino-acid chain; its full sequence is Pyrimidine/purine nucleoside phosphorylase (93 aa).

Belongs to the nucleoside phosphorylase PpnP family.

It carries out the reaction a purine D-ribonucleoside + phosphate = a purine nucleobase + alpha-D-ribose 1-phosphate. The catalysed reaction is adenosine + phosphate = alpha-D-ribose 1-phosphate + adenine. The enzyme catalyses cytidine + phosphate = cytosine + alpha-D-ribose 1-phosphate. It catalyses the reaction guanosine + phosphate = alpha-D-ribose 1-phosphate + guanine. It carries out the reaction inosine + phosphate = alpha-D-ribose 1-phosphate + hypoxanthine. The catalysed reaction is thymidine + phosphate = 2-deoxy-alpha-D-ribose 1-phosphate + thymine. The enzyme catalyses uridine + phosphate = alpha-D-ribose 1-phosphate + uracil. It catalyses the reaction xanthosine + phosphate = alpha-D-ribose 1-phosphate + xanthine. Catalyzes the phosphorolysis of diverse nucleosides, yielding D-ribose 1-phosphate and the respective free bases. Can use uridine, adenosine, guanosine, cytidine, thymidine, inosine and xanthosine as substrates. Also catalyzes the reverse reactions. This Pseudomonas syringae pv. tomato (strain ATCC BAA-871 / DC3000) protein is Pyrimidine/purine nucleoside phosphorylase.